Here is a 240-residue protein sequence, read N- to C-terminus: Uridylate kinase (240 aa).

13-16 (KISG) is a binding site for ATP. Gly-55 lines the UMP pocket. Gly-56 and Arg-60 together coordinate ATP. UMP is bound by residues Asp-75 and 136–143 (TGNPFFTT). ATP is bound by residues Thr-163, Gln-164, Tyr-169, and Asp-172.

This sequence belongs to the UMP kinase family. As to quaternary structure, homohexamer.

It is found in the cytoplasm. The catalysed reaction is UMP + ATP = UDP + ADP. It participates in pyrimidine metabolism; CTP biosynthesis via de novo pathway; UDP from UMP (UMPK route): step 1/1. Inhibited by UTP. Its function is as follows. Catalyzes the reversible phosphorylation of UMP to UDP. In Paramagnetospirillum magneticum (strain ATCC 700264 / AMB-1) (Magnetospirillum magneticum), this protein is Uridylate kinase.